The chain runs to 355 residues: Histidinol-phosphate aminotransferase (355 aa).

The residue at position 214 (Lys-214) is an N6-(pyridoxal phosphate)lysine.

This sequence belongs to the class-II pyridoxal-phosphate-dependent aminotransferase family. Histidinol-phosphate aminotransferase subfamily. Homodimer. The cofactor is pyridoxal 5'-phosphate.

The catalysed reaction is L-histidinol phosphate + 2-oxoglutarate = 3-(imidazol-4-yl)-2-oxopropyl phosphate + L-glutamate. Its pathway is amino-acid biosynthesis; L-histidine biosynthesis; L-histidine from 5-phospho-alpha-D-ribose 1-diphosphate: step 7/9. The sequence is that of Histidinol-phosphate aminotransferase (hisC) from Buchnera aphidicola subsp. Schizaphis graminum (strain Sg).